A 376-amino-acid polypeptide reads, in one-letter code: Cinnamyl alcohol dehydrogenase 2 (376 aa).

C44 lines the Zn(2+) pocket. S46 provides a ligand contact to NADP(+). Zn(2+) contacts are provided by H66, E67, C97, C100, C103, C111, and C161. NADP(+)-binding positions include T165, 187–192 (GLGGLG), 210–215 (SRSSEK), T250, G274, and 297–299 (SQI).

Belongs to the zinc-containing alcohol dehydrogenase family. In terms of assembly, homodimer. The cofactor is Zn(2+). Expressed at the base of the stems.

The catalysed reaction is (E)-cinnamyl alcohol + NADP(+) = (E)-cinnamaldehyde + NADPH + H(+). It catalyses the reaction (E)-coniferol + NADP(+) = (E)-coniferaldehyde + NADPH + H(+). The enzyme catalyses (E)-sinapyl alcohol + NADP(+) = (E)-sinapaldehyde + NADPH + H(+). It carries out the reaction (E)-4-coumaroyl alcohol + NADP(+) = (E)-4-coumaraldehyde + NADPH + H(+). The catalysed reaction is (E)-caffeyl alcohol + NADP(+) = (E)-caffeyl aldehyde + NADPH + H(+). The protein operates within aromatic compound metabolism; phenylpropanoid biosynthesis. Its function is as follows. Involved in lignin biosynthesis. Catalyzes the final step specific for the production of lignin monomers. Catalyzes the NADPH-dependent reduction of coniferaldehyde, 5-hydroxyconiferaldehyde, sinapaldehyde, 4-coumaraldehyde and caffeyl aldehyde to their respective alcohols. This Arabidopsis thaliana (Mouse-ear cress) protein is Cinnamyl alcohol dehydrogenase 2.